A 447-amino-acid polypeptide reads, in one-letter code: UPF0210 protein LEUM_1180 (447 aa).

It belongs to the UPF0210 family. In terms of assembly, homodimer.

This is UPF0210 protein LEUM_1180 from Leuconostoc mesenteroides subsp. mesenteroides (strain ATCC 8293 / DSM 20343 / BCRC 11652 / CCM 1803 / JCM 6124 / NCDO 523 / NBRC 100496 / NCIMB 8023 / NCTC 12954 / NRRL B-1118 / 37Y).